Consider the following 640-residue polypeptide: Probable potassium transport system protein Kup 1 (640 aa).

12 helical membrane-spanning segments follow: residues 24–44 (LGAL…TSPL), 67–87 (IASL…VLFV), 116–136 (VGPL…DGMI), 154–174 (PFFA…LFTI), 186–206 (FGPV…TEVV), 222–242 (TFLF…VLAV), 264–284 (WFAL…ALIL), 296–316 (MLVP…ATVI), 354–374 (IYIP…VVGF), 382–402 (AAYG…ALVV), 411–431 (LWLC…FLGA), and 436–456 (VTQG…LMAT).

Belongs to the HAK/KUP transporter (TC 2.A.72) family.

It is found in the cell inner membrane. The catalysed reaction is K(+)(in) + H(+)(in) = K(+)(out) + H(+)(out). Transport of potassium into the cell. Likely operates as a K(+):H(+) symporter. In Paramagnetospirillum magneticum (strain ATCC 700264 / AMB-1) (Magnetospirillum magneticum), this protein is Probable potassium transport system protein Kup 1.